Consider the following 358-residue polypeptide: MSKRKFKEELLEALVPEIYGPAADVKPDIKPRVLKRVKKREKKEEKEEAGLLDDGVEFVRSFAPRRRVQWRGRKVQRVLRPGTTVVFTPGERSVTRALKRDYDEVYADEDILEQAAQQVGEFAYGKRGRYGELGLLLDQSNPTPSLKPATAQQILPVTEIKRGVKRENKDELQPTMQLMVPKRQKLEEVLENMKVDPSVEPEVKVRPIKEIGPGLGVQTVDIQIPVRASSSTVSTAVEAMETQPELPEAVARAVAATREMGLQTDPWYEFVAPTSRPRSRKYTTANSILPEYALHPSITPTPGYRGTTFKPSRTRSTRRRRSVRRRSRRTAPISVRRVTRRGRTLTLPNARYHPSILV.

Residues Pro296 to Ala331 form a disordered region. Residues Ser312–Arg329 are compositionally biased toward basic residues.

It belongs to the adenoviridae core-capsid bridging protein family. In terms of assembly, monomer. Homodimer. Exists in equilibrium between monomers and dimers in solution. Interacts with the histone-like nucleoprotein; this interactions bridge the virus core to the capsid. Interacts with core protein X; this interactions bridge the virus core to the capsid. Interacts with the endosome lysis protein VI; this interactions bridge the virus core to the capsid. Interacts with the peripentonal hexons. Interacts with host NPM1; this interaction might play a role in virus assembly.

Its subcellular location is the virion. It localises to the host nucleus. The protein localises to the host nucleolus. In terms of biological role, associates loosely with the viral DNA to form an outer shell around the nucleoprotein-DNA complex and links it with the capsid by binding the endosome lysis protein. Dissociates from the viral genome during entry. Might be involved in nuclear capsid assembly of the viral particles through its association with NPM1/nucleophosmin. The chain is Core-capsid bridging protein from Human adenovirus F serotype 40 (HAdV-40).